Consider the following 120-residue polypeptide: MADFNSPIQYLKEDSRDRTSIGSLEYDENSDTIIPSFAAGLEDFEPIPSPTTSTSLYSQLTHNMEKIAEEEDINFLHDTREFTSLVPDKADNKPEDDEESGAKPKKKKHLFPKLSSHKSK.

2 disordered regions span residues 1–27 (MADF…LEYD) and 80–120 (REFT…HKSK). Alanine 2 bears the N-acetylalanine; by host mark. Positions 103–120 (KPKKKKHLFPKLSSHKSK) are enriched in basic residues.

It belongs to the asfivirus structural protein p14.5 family. As to quaternary structure, interacts with the major capsid protein. Interacts with host IRF3; this interaction interferes with the recruitment of IRF3 to TBK1. In terms of processing, acetylated.

The protein resides in the virion. Functionally, structural protein required for transport of intracellular particles from the assembly sites to the plasma membrane. Binds to both ssDNA and dsDNA. Suppressed the activation of the cGAS/STING pathway by interfering with the recruitment of IRF3 to TBK1, which in turn suppresses IRF3 phosphorylation, decreasing interferon production. The protein is Protein p14.5 of Ornithodoros (relapsing fever ticks).